Consider the following 217-residue polypeptide: 3,4-dihydroxy-2-butanone 4-phosphate synthase (217 aa).

D-ribulose 5-phosphate contacts are provided by residues 37–38 (RE), aspartate 42, 150–154 (RGGHT), and glutamate 174. Position 38 (glutamate 38) interacts with Mg(2+). Histidine 153 is a binding site for Mg(2+).

Belongs to the DHBP synthase family. As to quaternary structure, homodimer. It depends on Mg(2+) as a cofactor. Requires Mn(2+) as cofactor.

The catalysed reaction is D-ribulose 5-phosphate = (2S)-2-hydroxy-3-oxobutyl phosphate + formate + H(+). Its pathway is cofactor biosynthesis; riboflavin biosynthesis; 2-hydroxy-3-oxobutyl phosphate from D-ribulose 5-phosphate: step 1/1. Its function is as follows. Catalyzes the conversion of D-ribulose 5-phosphate to formate and 3,4-dihydroxy-2-butanone 4-phosphate. The chain is 3,4-dihydroxy-2-butanone 4-phosphate synthase from Klebsiella pneumoniae (strain 342).